Here is a 220-residue protein sequence, read N- to C-terminus: MNLKQLAGEYAANFVNDGMKIGLGTGSTVYWTIQKLGERVKEGLSFQAVPTSKETEALAQQLNIPLISLNDVQSLDLTIDGADEIDSNLQLIKGGGGALLREKIVASSSKKLIIIADESKLVTHLGTFPLPIEIIPFSWKQTENKIQSLGCQTTLRLKNNETYITDNNNMIIDCIFPNHISNPVHLHTQLKMITGVVETGLFISMTSTAIIGTKNGIKKL.

Substrate-binding positions include 25 to 28 (TGST), 80 to 83 (DGAD), and 93 to 96 (KGGG). E102 serves as the catalytic Proton acceptor. K120 provides a ligand contact to substrate.

This sequence belongs to the ribose 5-phosphate isomerase family. As to quaternary structure, homodimer.

The enzyme catalyses aldehydo-D-ribose 5-phosphate = D-ribulose 5-phosphate. It participates in carbohydrate degradation; pentose phosphate pathway; D-ribose 5-phosphate from D-ribulose 5-phosphate (non-oxidative stage): step 1/1. In terms of biological role, catalyzes the reversible conversion of ribose-5-phosphate to ribulose 5-phosphate. The chain is Ribose-5-phosphate isomerase A from Bacillus cereus (strain ATCC 14579 / DSM 31 / CCUG 7414 / JCM 2152 / NBRC 15305 / NCIMB 9373 / NCTC 2599 / NRRL B-3711).